Here is a 220-residue protein sequence, read N- to C-terminus: UPF0711 protein C18orf21 (220 aa).

Residues 117 to 181 (SRSFVSTLKS…VSTCSSKNTS (65 aa)) form a disordered region. Residues 119–136 (SFVSTLKSNPATPTSKLS) are compositionally biased toward polar residues. At S126 the chain carries Phosphoserine. T130 and T139 each carry phosphothreonine. A compositionally biased stretch (low complexity) spans 171 to 180 (SVSTCSSKNT).

Belongs to the UPF0711 family.

The protein is UPF0711 protein C18orf21 (C18orf21) of Homo sapiens (Human).